The primary structure comprises 107 residues: Large ribosomal subunit protein uL18c (107 aa).

It belongs to the universal ribosomal protein uL18 family. As to quaternary structure, part of the 50S ribosomal subunit; contacts the 5S rRNA.

The protein localises to the plastid. It is found in the chloroplast. Its function is as follows. Binds 5S rRNA, forms part of the central protuberance of the 50S subunit. The protein is Large ribosomal subunit protein uL18c (rpl18) of Guillardia theta (Cryptophyte).